Reading from the N-terminus, the 434-residue chain is Cysteine proteinase 6 (434 aa).

Positions 1–19 (MKVLSALCVLLVSVATAKQ) are cleaved as a signal peptide. Positions 20–113 (QLSELQYRNA…SEKVFGGVQA (94 aa)) are cleaved as a propeptide — activation peptide. Disulfide bonds link C133–C178 and C169–C211. C136 is an active-site residue. N-linked (GlcNAc...) asparagine glycosylation is present at N227. C269 and C416 form a disulfide bridge. Residue H276 is part of the active site. A disordered region spans residues 285-384 (SGSSGSQSQS…GGNSNSGDYP (100 aa)). Over residues 288–347 (SGSQSQSAGSQSQSSNNNWSESSQSQDSNSWSQSSQSQSSQDSNSWSQSSQSQGSNSFTG) the composition is skewed to low complexity. The N-linked (GlcNAc...) asparagine glycan is linked to N305. A compositionally biased stretch (gly residues) spans 348-358 (AGTGSGSGSVS). A compositionally biased stretch (low complexity) spans 359–381 (GSGSASGSSSFSGSSNGGNSNSG). The active site involves N394.

Belongs to the peptidase C1 family.

The protein localises to the lysosome. The polypeptide is Cysteine proteinase 6 (cprF) (Dictyostelium discoideum (Social amoeba)).